The following is a 323-amino-acid chain: tRNA U34 carboxymethyltransferase (323 aa).

Carboxy-S-adenosyl-L-methionine is bound by residues Lys-91, Trp-105, Lys-110, Gly-130, 152–154 (DPT), 181–182 (IE), Met-196, Tyr-200, and Arg-315.

The protein belongs to the class I-like SAM-binding methyltransferase superfamily. CmoB family. As to quaternary structure, homotetramer.

The catalysed reaction is carboxy-S-adenosyl-L-methionine + 5-hydroxyuridine(34) in tRNA = 5-carboxymethoxyuridine(34) in tRNA + S-adenosyl-L-homocysteine + H(+). Functionally, catalyzes carboxymethyl transfer from carboxy-S-adenosyl-L-methionine (Cx-SAM) to 5-hydroxyuridine (ho5U) to form 5-carboxymethoxyuridine (cmo5U) at position 34 in tRNAs. The polypeptide is tRNA U34 carboxymethyltransferase (Salmonella paratyphi A (strain ATCC 9150 / SARB42)).